Consider the following 486-residue polypeptide: Glutamate--tRNA ligase (486 aa).

A 'HIGH' region motif is present at residues 11–21 (PSPTGLLHIGN). Positions 255–259 (KLSKR) match the 'KMSKS' region motif. Lys258 contributes to the ATP binding site.

This sequence belongs to the class-I aminoacyl-tRNA synthetase family. Glutamate--tRNA ligase type 1 subfamily. Monomer.

The protein resides in the cytoplasm. The enzyme catalyses tRNA(Glu) + L-glutamate + ATP = L-glutamyl-tRNA(Glu) + AMP + diphosphate. Functionally, catalyzes the attachment of glutamate to tRNA(Glu) in a two-step reaction: glutamate is first activated by ATP to form Glu-AMP and then transferred to the acceptor end of tRNA(Glu). This chain is Glutamate--tRNA ligase, found in Streptococcus pneumoniae serotype 19F (strain G54).